Reading from the N-terminus, the 266-residue chain is MNWGFLQGILSGVNKYSTALGRIWLSVVFIFRVLVYVVAAEEVWDDDQKDFICNTKQPGCPNVCYDEFFPVSHVRLWALQLILVTCPSLLVVMHVAYREERERKHRLKHGPNAPALYSNLSKKRGGLWWTYLLSLIFKAAVDSGFLYIFHCIYKDYDMPRVVACSVTPCPHTVDCYIARPTEKKVFTYFMVVTAAICILLNLSEVVYLVGKRCMEVFRPRRRKASRRHQLPDTCPPYVISKGGHPQDESVILTKAGMATVDAGVYP.

An intramembrane segment occupies 2 to 13; it reads NWGFLQGILSGV. Over 14 to 20 the chain is Cytoplasmic; it reads NKYSTAL. A helical membrane pass occupies residues 21-40; the sequence is GRIWLSVVFIFRVLVYVVAA. The Extracellular segment spans residues 41–73; the sequence is EEVWDDDQKDFICNTKQPGCPNVCYDEFFPVSH. 3 disulfides stabilise this stretch: C53–C175, C60–C169, and C64–C164. A helical transmembrane segment spans residues 74–94; it reads VRLWALQLILVTCPSLLVVMH. Residues 95-130 are Cytoplasmic-facing; sequence VAYREERERKHRLKHGPNAPALYSNLSKKRGGLWWT. The chain crosses the membrane as a helical span at residues 131 to 151; that stretch reads YLLSLIFKAAVDSGFLYIFHC. Topologically, residues 152–184 are extracellular; it reads IYKDYDMPRVVACSVTPCPHTVDCYIARPTEKK. The chain crosses the membrane as a helical span at residues 185–205; sequence VFTYFMVVTAAICILLNLSEV. Topologically, residues 206–266 are cytoplasmic; sequence VYLVGKRCME…MATVDAGVYP (61 aa).

This sequence belongs to the connexin family. Beta-type (group I) subfamily. A hemichannel or connexon is composed of a hexamer of connexins. A functional gap junction is formed by the apposition of two hemichannels. Forms heteromeric channels with GJB2. Detected in cochlea (at protein level). Detected in cochlea. Expressed in skin.

It is found in the cell membrane. It localises to the cell junction. Its subcellular location is the gap junction. Functionally, structural component of gap junctions. Gap junctions are dodecameric channels that connect the cytoplasm of adjoining cells. They are formed by the docking of two hexameric hemichannels, one from each cell membrane. Small molecules and ions diffuse from one cell to a neighboring cell via the central pore. The protein is Gap junction beta-4 protein (Gjb4) of Mus musculus (Mouse).